A 128-amino-acid chain; its full sequence is Azurin (128 aa).

One can recognise a Plastocyanin-like domain in the interval 1-128 (AECKVTVDST…SMMKGTVTVK (128 aa)). A disulfide bond links cysteine 3 and cysteine 26. Cu cation is bound by residues histidine 46, cysteine 112, histidine 117, and methionine 121.

The protein resides in the periplasm. In terms of biological role, transfers electrons from cytochrome c551 to cytochrome oxidase. The sequence is that of Azurin from Pseudomonas fluorescens biotype A.